We begin with the raw amino-acid sequence, 25 residues long: Bioremediase (25 aa).

The region spanning 1–25 is the Alpha-carbonic anhydrase domain; sequence DFPIANGERQSPVDIDTKAVVQDPA. A disordered region spans residues 1 to 25; that stretch reads DFPIANGERQSPVDIDTKAVVQDPA.

The protein belongs to the alpha-carbonic anhydrase family. Zn(2+) serves as cofactor.

Its function is as follows. Releases silica from silica-rich substances. This is Bioremediase from Thermoanaerobacter sp.